Here is a 70-residue protein sequence, read N- to C-terminus: Small ribosomal subunit protein bS21 (70 aa).

This sequence belongs to the bacterial ribosomal protein bS21 family.

This Polynucleobacter asymbioticus (strain DSM 18221 / CIP 109841 / QLW-P1DMWA-1) (Polynucleobacter necessarius subsp. asymbioticus) protein is Small ribosomal subunit protein bS21.